The primary structure comprises 102 residues: uncharacterized protein (102 aa).

This is an uncharacterized protein from Sinorhizobium fredii (strain NBRC 101917 / NGR234).